A 455-amino-acid polypeptide reads, in one-letter code: Golgi pH regulator A (455 aa).

The next 5 membrane-spanning stretches (helical) occupy residues 5-25 (IDSSIMITSQILFFGFGWLFF), 46-66 (VTFAFSCTMFELIIFEILGVL), 79-99 (LCVILLILVFMVPFYIGYFIV), 114-134 (CLLWLTFMYFFWKLGDPFPIL), and 150-170 (VGVIGVTLMALLSGFGAVNCP). N-linked (GlcNAc...) asparagine glycosylation is found at Asn-180 and Asn-243. The next 4 membrane-spanning stretches (helical) occupy residues 290–310 (GYFFSIYCVWKIFMATINIVF), 343–363 (ISFILVGIIIVTSIRGLLITL), 378–398 (VIVLLLAQIMGMYFVSSVLLI), and 425–445 (WFDVIFLVSALSSILFLYLAH).

This sequence belongs to the Golgi pH regulator (TC 1.A.38) family. In terms of assembly, homotrimer. Interacts with RABL3; the interaction stabilizes GPR89A. Ubiquitous.

It localises to the golgi apparatus membrane. The catalysed reaction is iodide(out) = iodide(in). It carries out the reaction chloride(in) = chloride(out). The enzyme catalyses bromide(in) = bromide(out). It catalyses the reaction fluoride(in) = fluoride(out). Its function is as follows. Voltage-gated channel that enables the transfer of monoatomic anions such as iodide, chloride, bromide and fluoride which may function in counter-ion conductance and participates in Golgi acidification. Plays a role in lymphocyte development, probably by acting as a RABL3 effector in hematopoietic cells. This Homo sapiens (Human) protein is Golgi pH regulator A.